A 319-amino-acid polypeptide reads, in one-letter code: Meiotic drive suppressor wtf16 (319 aa).

Disordered regions lie at residues 1-22 (MKNN…KTGH) and 35-68 (DSEE…RSTD). 6 helical membrane passes run 73 to 93 (FLIK…LAIC), 110 to 130 (WTLF…LTYF), 153 to 173 (VVII…CIKF), 187 to 207 (CSIS…FWTL), 215 to 235 (FQVL…MYLF), and 241 to 261 (ATGY…FFFY).

It belongs to the WTF family. As to quaternary structure, homomer. Interacts with other proteins that exhibit high sequence similarity.

The protein localises to the spore membrane. Its subcellular location is the vacuole membrane. Acts as a suppressor component of the dual wtf meiotic drive system, and can suppress but not confer meiotic drive by compatible poisons. Wtf meiotic drive systems promote unequal transmission of alleles from the parental zygote to progeny spores by encoding a poison and an antidote from the same locus; the poison is trans-acting and forms toxic aggregates in all spores within an ascus, wherease the antidote is spore-specific and targets aggregates for degradation by the vacuole. Meiotic drive by wtf systems therefore lead to poisoning of all progeny that do not inherit the dual poison/antidote allele, or express a compatible antidote. This chain is Meiotic drive suppressor wtf16, found in Schizosaccharomyces pombe (strain 972 / ATCC 24843) (Fission yeast).